Reading from the N-terminus, the 738-residue chain is Cleavage and polyadenylation specificity factor subunit 2 (738 aa).

The protein belongs to the metallo-beta-lactamase superfamily. RNA-metabolizing metallo-beta-lactamase-like family. CPSF2/YSH1 subfamily. CPSF is a heterotetramer composed of four distinct subunits 160, 100, 70 and 30 kDa.

The protein localises to the nucleus. In terms of biological role, CPSF plays a key role in pre-mRNA 3'-end formation, recognizing the AAUAAA signal sequence and interacting with poly(A)polymerase and other factors to bring about cleavage and poly(A) addition. The protein is Cleavage and polyadenylation specificity factor subunit 2 of Oryza sativa subsp. japonica (Rice).